The sequence spans 223 residues: Ribonuclease 3 (223 aa).

Residues 4–127 (LNRLEEHLGY…LMGAIYLESG (124 aa)) enclose the RNase III domain. E40 serves as a coordination point for Mg(2+). D44 is a catalytic residue. Residues D113 and E116 each coordinate Mg(2+). E116 is an active-site residue. Residues 154–223 (DYKTTLQEIT…AWKVLQGMNI (70 aa)) enclose the DRBM domain.

Belongs to the ribonuclease III family. Homodimer. It depends on Mg(2+) as a cofactor.

Its subcellular location is the cytoplasm. The catalysed reaction is Endonucleolytic cleavage to 5'-phosphomonoester.. In terms of biological role, digests double-stranded RNA. Involved in the processing of primary rRNA transcript to yield the immediate precursors to the large and small rRNAs (23S and 16S). Processes some mRNAs, and tRNAs when they are encoded in the rRNA operon. Processes pre-crRNA and tracrRNA of type II CRISPR loci if present in the organism. The chain is Ribonuclease 3 from Campylobacter fetus subsp. fetus (strain 82-40).